Reading from the N-terminus, the 72-residue chain is Translation initiation factor IF-1 (72 aa).

The S1-like domain maps to 1–72; sequence MAKDDVIEID…DKGRITYRYK (72 aa).

Belongs to the IF-1 family. In terms of assembly, component of the 30S ribosomal translation pre-initiation complex which assembles on the 30S ribosome in the order IF-2 and IF-3, IF-1 and N-formylmethionyl-tRNA(fMet); mRNA recruitment can occur at any time during PIC assembly.

It is found in the cytoplasm. One of the essential components for the initiation of protein synthesis. Stabilizes the binding of IF-2 and IF-3 on the 30S subunit to which N-formylmethionyl-tRNA(fMet) subsequently binds. Helps modulate mRNA selection, yielding the 30S pre-initiation complex (PIC). Upon addition of the 50S ribosomal subunit IF-1, IF-2 and IF-3 are released leaving the mature 70S translation initiation complex. This chain is Translation initiation factor IF-1, found in Campylobacter curvus (strain 525.92).